The primary structure comprises 138 residues: Phosphoribosyl-AMP cyclohydrolase (138 aa).

Residue Asp84 participates in Mg(2+) binding. Cys85 lines the Zn(2+) pocket. Residues Asp86 and Asp88 each contribute to the Mg(2+) site. Residues Cys102 and Cys109 each coordinate Zn(2+).

The protein belongs to the PRA-CH family. Homodimer. Mg(2+) serves as cofactor. It depends on Zn(2+) as a cofactor.

The protein resides in the cytoplasm. The catalysed reaction is 1-(5-phospho-beta-D-ribosyl)-5'-AMP + H2O = 1-(5-phospho-beta-D-ribosyl)-5-[(5-phospho-beta-D-ribosylamino)methylideneamino]imidazole-4-carboxamide. Its pathway is amino-acid biosynthesis; L-histidine biosynthesis; L-histidine from 5-phospho-alpha-D-ribose 1-diphosphate: step 3/9. Functionally, catalyzes the hydrolysis of the adenine ring of phosphoribosyl-AMP. The polypeptide is Phosphoribosyl-AMP cyclohydrolase (Burkholderia orbicola (strain MC0-3)).